Here is a 499-residue protein sequence, read N- to C-terminus: Calcium/calmodulin-dependent protein kinase type II subunit delta (499 aa).

Ala2 carries the post-translational modification N-acetylalanine. In terms of domain architecture, Protein kinase spans 14–272 (YQLFEELGKG…ASEALKHPWI (259 aa)). Residues 20–28 (LGKGAFSVV) and Lys43 each bind ATP. Asp136 acts as the Proton acceptor in catalysis. Residues 283–292 (HRQETVDCLK) are autoinhibitory domain. Thr287 is modified (phosphothreonine; by autocatalysis). The calmodulin-binding stretch occupies residues 291–301 (LKKFNARRKLK). A phosphothreonine; by autocatalysis mark is found at Thr306 and Thr307. Ser315 bears the Phosphoserine mark. Position 318 is an N6-acetyllysine (Lys318). Ser319 and Ser330 each carry phosphoserine. At Thr331 the chain carries Phosphothreonine. Ser333 bears the Phosphoserine mark. Residues Thr336 and Thr337 each carry the phosphothreonine modification. Ser404, Ser490, and Ser494 each carry phosphoserine.

It belongs to the protein kinase superfamily. CAMK Ser/Thr protein kinase family. CaMK subfamily. In terms of assembly, CAMK2 is composed of 4 different chains: alpha (CAMK2A), beta (CAMK2B), gamma (CAMK2G), and delta (CAMK2D). The different isoforms assemble into homo- or heteromultimeric holoenzymes composed of 12 subunits with two hexameric rings stacked one on top of the other. Interacts with RRAD and CACNB2. Autophosphorylation of Thr-287 following activation by Ca(2+)/calmodulin. Phosphorylation of Thr-287 locks the kinase into an activated state. In terms of tissue distribution, expressed in cardiac muscle and skeletal muscle. Isoform Delta 3, isoform Delta 2, isoform Delta 8 and isoform Delta 9 are expressed in cardiac muscle. Isoform Delta 11 is expressed in skeletal muscle.

The protein resides in the cell membrane. It is found in the sarcolemma. The protein localises to the sarcoplasmic reticulum membrane. It carries out the reaction L-seryl-[protein] + ATP = O-phospho-L-seryl-[protein] + ADP + H(+). It catalyses the reaction L-threonyl-[protein] + ATP = O-phospho-L-threonyl-[protein] + ADP + H(+). With respect to regulation, activated by Ca(2+)/calmodulin. Binding of calmodulin results in conformational change that relieves intrasteric autoinhibition and allows autophosphorylation of Thr-287 which turns the kinase in a constitutively active form and confers to the kinase a Ca(2+)-independent activity. In terms of biological role, calcium/calmodulin-dependent protein kinase involved in the regulation of Ca(2+) homeostatis and excitation-contraction coupling (ECC) in heart by targeting ion channels, transporters and accessory proteins involved in Ca(2+) influx into the myocyte, Ca(2+) release from the sarcoplasmic reticulum (SR), SR Ca(2+) uptake and Na(+) and K(+) channel transport. Targets also transcription factors and signaling molecules to regulate heart function. In its activated form, is involved in the pathogenesis of dilated cardiomyopathy and heart failure. Contributes to cardiac decompensation and heart failure by regulating SR Ca(2+) release via direct phosphorylation of RYR2 Ca(2+) channel on 'Ser-2808'. In the nucleus, phosphorylates the MEF2 repressor HDAC4, promoting its nuclear export and binding to 14-3-3 protein, and expression of MEF2 and genes involved in the hypertrophic program. Is essential for left ventricular remodeling responses to myocardial infarction. In pathological myocardial remodeling acts downstream of the beta adrenergic receptor signaling cascade to regulate key proteins involved in ECC. Regulates Ca(2+) influx to myocytes by binding and phosphorylating the L-type Ca(2+) channel subunit beta-2 CACNB2. In addition to Ca(2+) channels, can target and regulate the cardiac sarcolemmal Na(+) channel Nav1.5/SCN5A and the K+ channel Kv4.3/KCND3, which contribute to arrhythmogenesis in heart failure. Phosphorylates phospholamban (PLN/PLB), an endogenous inhibitor of SERCA2A/ATP2A2, contributing to the enhancement of SR Ca(2+) uptake that may be important in frequency-dependent acceleration of relaxation (FDAR) and maintenance of contractile function during acidosis. May participate in the modulation of skeletal muscle function in response to exercise, by regulating SR Ca(2+) transport through phosphorylation of PLN/PLB and triadin, a ryanodine receptor-coupling factor. In response to interferon-gamma (IFN-gamma) stimulation, catalyzes phosphorylation of STAT1, stimulating the JAK-STAT signaling pathway. In Homo sapiens (Human), this protein is Calcium/calmodulin-dependent protein kinase type II subunit delta (CAMK2D).